The following is a 355-amino-acid chain: Guanine nucleotide-binding protein alpha-12 subunit (355 aa).

In terms of domain architecture, G-alpha spans 28–355 (RQINLLLLGS…EQNLKTLMMQ (328 aa)). Residues 31–44 (NLLLLGSGESGKST) form a G1 motif region. Residues 36–43 (GSGESGKS), 176–182 (LFCRKAT), 201–205 (DVGGQ), 270–273 (NKND), and Ala-327 contribute to the GTP site. Mg(2+)-binding residues include Ser-43 and Thr-182. Positions 174–182 (DILFCRKAT) are G2 motif. Residues 197-206 (FRFIDVGGQR) form a G3 motif region. Residues 266–273 (ILFMNKND) are G4 motif. The tract at residues 325–330 (TTAVDT) is G5 motif.

The protein belongs to the G-alpha family. In terms of assembly, g proteins are composed of 3 units; alpha, beta and gamma. The alpha chain contains the guanine nucleotide binding site.

Its function is as follows. Guanine nucleotide-binding proteins (G proteins) are involved as modulators or transducers in various transmembrane signaling systems. May play a role in resistance to fungal infection in the epidermis by regulating the up-regulation of several antimicrobial peptides of the NLP and CNC families. Upstream of plc-3, tpa-1 and the p38-like pathway, required for the expression of antimicrobial peptide nlp-29 in the epidermis in response to fungal infection or physical injury. In Caenorhabditis elegans, this protein is Guanine nucleotide-binding protein alpha-12 subunit (gpa-12).